Here is a 485-residue protein sequence, read N- to C-terminus: Glutamate--tRNA ligase (485 aa).

Residues 11–21 carry the 'HIGH' region motif; it reads PSPTGHLHIGN. The 'KMSKS' region signature appears at 252–256; the sequence is KLSKR. Lys255 contacts ATP.

Belongs to the class-I aminoacyl-tRNA synthetase family. Glutamate--tRNA ligase type 1 subfamily. Monomer.

The protein resides in the cytoplasm. It catalyses the reaction tRNA(Glu) + L-glutamate + ATP = L-glutamyl-tRNA(Glu) + AMP + diphosphate. Functionally, catalyzes the attachment of glutamate to tRNA(Glu) in a two-step reaction: glutamate is first activated by ATP to form Glu-AMP and then transferred to the acceptor end of tRNA(Glu). In Bacillus cytotoxicus (strain DSM 22905 / CIP 110041 / 391-98 / NVH 391-98), this protein is Glutamate--tRNA ligase.